Consider the following 2616-residue polypeptide: Serine protease ndl (2616 aa).

Positions 1–43 (MNYNMDEMEATRLLRHPRRWWSIGFGKRIVAISILVIIVLLFS) are cleaved as a signal peptide. Phosphoserine is present on residues Ser215 and Ser220. A WIID 1 repeat occupies 261–269 (ISWIIDGHD). N-linked (GlcNAc...) asparagine glycosylation is present at Asn291. The stretch at 320–328 (ISWILDHFD) is one WIID 2 repeat. Asn347 carries an N-linked (GlcNAc...) asparagine glycan. The disordered stretch occupies residues 352–375 (SASSEPIVDTENTNSDHVPTTENG). N-linked (GlcNAc...) asparagine glycosylation occurs at Asn379. A WIID 3 repeat occupies 399–407 (FDWILDGEE). An N-linked (GlcNAc...) asparagine glycan is attached at Asn417. 2 WIID repeats span residues 446 to 454 (FDWIIDGRE) and 477 to 485 (FDWIIDGEE). Asn492 and Asn515 each carry an N-linked (GlcNAc...) asparagine glycan. One copy of the WIID 6 repeat lies at 528–536 (FDWIIDGGE). Residues 537 to 547 (SSGEVSTSSTS) are compositionally biased toward low complexity. The segment at 537–574 (SSGEVSTSSTSQPKLTTREAISNPESPRSSHPLDNPTS) is disordered. The segment covering 548–565 (QPKLTTREAISNPESPRS) has biased composition (polar residues). Phosphoserine occurs at positions 574 and 581. Asn598 carries an N-linked (GlcNAc...) asparagine glycan. The O-linked (Xyl...) (glycosaminoglycan) serine glycan is linked to Ser794. A disordered region spans residues 798 to 817 (GQGANIFSKNASPQKPTNGQ). The segment covering 804–817 (FSKNASPQKPTNGQ) has biased composition (polar residues). An N-linked (GlcNAc...) asparagine glycan is attached at Asn827. Residue Ser829 is glycosylated (O-linked (Xyl...) (glycosaminoglycan) serine). Asn861 carries N-linked (GlcNAc...) asparagine glycosylation. LDL-receptor class A domains lie at 889-929 (SRCP…ACTC) and 955-1006 (FGCE…QCSM). 3 disulfide bridges follow: Cys891–Cys905, Cys899–Cys918, and Cys912–Cys927. In terms of domain architecture, LDL-receptor class A 2; truncated spans 929–956 (CADRVDEERLCDGYEDCPMGEDELGCFG). 3 disulfides stabilise this stretch: Cys957-Cys982, Cys964-Cys995, and Cys989-Cys1004. An N-linked (GlcNAc...) asparagine glycan is attached at Asn975. Positions 1031–1033 (RGD) match the Cell attachment site motif. Asn1064 is a glycosylation site (N-linked (GlcNAc...) asparagine). Ser1134 and Ser1136 each carry phosphoserine. In terms of domain architecture, Peptidase S1 1 spans 1145–1383 (IVGGSYTSAL…YLDWLEMATT (239 aa)). An intrachain disulfide couples Cys1170 to Cys1186. Residues His1185 and Asp1233 each act as charge relay system in the active site. 6 disulfides stabilise this stretch: Cys1276–Cys1338, Cys1305–Cys1317, Cys1328–Cys1359, Cys1396–Cys1408, Cys1401–Cys1421, and Cys1415–Cys1430. Ser1332 functions as the Charge relay system in the catalytic mechanism. One can recognise an LDL-receptor class A 4 domain in the interval 1394-1432 (QLCPGFICVWGGKRCIAKRQRCDRNVDCLGGEDEVGCTY). Asn1445 carries an N-linked (GlcNAc...) asparagine glycan. 2 disordered regions span residues 1530-1557 (FTVS…PSTN) and 1683-1704 (PTTT…HSEK). Composition is skewed to low complexity over residues 1537-1557 (TSPS…PSTN) and 1683-1700 (PTTT…SSST). Residues 1713-1743 (FVCKKMSQIVDIMMRCDRKVDCEDGTDELDC) form the LDL-receptor class A 5; truncated domain. 6 disulfides stabilise this stretch: Cys1728-Cys1745, Cys1734-Cys1764, Cys1758-Cys1773, Cys1776-Cys1789, Cys1783-Cys1802, and Cys1796-Cys1811. The LDL-receptor class A 6; truncated domain maps to 1745–1775 (CKDYLKGSLKGLICDGKADCEDLTDEQNCVE). Residues 1774 to 1813 (VECQSNEFRCPLSKTCLPLSSRCDNKVDCKFKEDEKDCFA) enclose the LDL-receptor class A 7 domain. N-linked (GlcNAc...) asparagine glycosylation is found at Asn1878, Asn1956, and Asn2023. One can recognise a Peptidase S1 2 domain in the interval 2027-2301 (LVNEQLHEAI…LQDIIDKPSC (275 aa)). Cys2055 and Cys2071 are joined by a disulfide. N-linked (GlcNAc...) asparagine glycosylation is found at Asn2144, Asn2173, Asn2197, Asn2237, and Asn2269. Cys2177 and Cys2230 form a disulfide bridge. LDL-receptor class A domains lie at 2308-2346 (PDCS…KCRQ), 2349-2389 (QQCA…ICSC), and 2419-2459 (CNCT…YCFG). 6 disulfide bridges follow: Cys2310–Cys2320, Cys2315–Cys2333, Cys2327–Cys2344, Cys2351–Cys2364, Cys2358–Cys2377, and Cys2371–Cys2387. One can recognise an LDL-receptor class A 10; truncated domain in the interval 2387–2419 (CSCFTYLQATDPSKICDGKRNCWDKSDESSVLC). Asn2420 is a glycosylation site (N-linked (GlcNAc...) asparagine). 3 cysteine pairs are disulfide-bonded: Cys2421-Cys2435, Cys2428-Cys2448, and Cys2442-Cys2457. N-linked (GlcNAc...) asparagine glycans are attached at residues Asn2556 and Asn2601.

It belongs to the peptidase S1 family. Post-translationally, requires cleavage for activation (presumably). As to expression, follicle.

The protein localises to the secreted. It is found in the extracellular space. The protein resides in the extracellular matrix. Functionally, component of the extracellular signaling pathway that establishes the dorsal-ventral pathway of the embryo. A protease cascade involving ndl, gd, snk and ea results in activation of the spz Toll receptor ligand; acts upstream of gd, snk and ea and is required for proteolytic processing of gd. Activation of ea requires activation of the ndl-gd-snk protease cascade and sulfation of a vitelline membrane component by pip. Localized activation of the Toll receptor in the ventral region of the embryo defines cell identities along the dorsal-ventral continuum. In Drosophila melanogaster (Fruit fly), this protein is Serine protease ndl.